We begin with the raw amino-acid sequence, 212 residues long: uncharacterized protein (212 aa).

A signal peptide spans 1–21 (MRRLTAFGLALLLLASGVARG).

This sequence to E.coli YfaT and T.maritima TM0986.

This is an uncharacterized protein from Pseudomonas aeruginosa (strain ATCC 15692 / DSM 22644 / CIP 104116 / JCM 14847 / LMG 12228 / 1C / PRS 101 / PAO1).